The sequence spans 1004 residues: Protein phosphatase 1 regulatory subunit 12A (1004 aa).

The tract at residues 35-38 is important for interaction with PPP1CB; that stretch reads KVKF. ANK repeat units follow at residues 39-68, 72-101, 105-134, 138-164, 198-227, and 231-260; these read DDGA…DINY, DGLT…NINQ, EGWI…HVGA, EGDT…RQGV, SGGT…DVNI, and DGWT…DMEA. Residues 291–300 show a composition bias toward basic and acidic residues; it reads HSEKREKKSP. The disordered stretch occupies residues 291-920; it reads HSEKREKKSP…SYLEDRKPYC (630 aa). Positions 302-316 are enriched in polar residues; it reads IESTANLDNNQTQKT. Basic and acidic residues-rich tracts occupy residues 318-329 and 336-353; these read KNKETLIMEQEK and SLEH…KDES. Over residues 357-369 the composition is skewed to acidic residues; that stretch reads SEEEEDDDSESEA. Positions 378 to 392 are enriched in polar residues; it reads ANANTTSTQSASMTA. The span at 417–427 shows a compositional bias: basic and acidic residues; it reads SPKEEERKDES. The span at 464–475 shows a compositional bias: low complexity; that stretch reads RSASSPRLSSSL. Positions 476–486 are enriched in basic and acidic residues; the sequence is DNKEKEKDGKG. Over residues 514–525 the composition is skewed to low complexity; sequence SSASSIRSGSSY. Residues 528-538 are compositionally biased toward basic and acidic residues; that stretch reads RKWEEDVKKNS. The span at 539–554 shows a compositional bias: polar residues; the sequence is LNEGPTSLNTSYQRSG. 2 stretches are compositionally biased toward low complexity: residues 564–578 and 587–602; these read VSSN…VTSS and ASAN…STSA. The segment covering 613–624 has biased composition (basic and acidic residues); that stretch reads WAEDSTEKEKDS. Residues 625-659 are compositionally biased toward low complexity; the sequence is VPTAVTVPVAPSVVNAAATTTAMTTATSGTVSSTS. Over residues 672–681 the composition is skewed to basic and acidic residues; it reads VRDEESESQR. Residues 682-692 show a composition bias toward basic residues; sequence KARSRQARQSR. Phosphothreonine; by ROCK2 is present on Thr-695. Residues 717–765 are compositionally biased toward basic and acidic residues; the sequence is RTREQENEEKEKEEKEKQDKEKQEEKKESETKDDDYRQRYSRTVEEPYH. A compositionally biased stretch (low complexity) spans 770–793; it reads TSTSTSTSSTSSLSTSTSSLSSSS. Positions 794-808 are enriched in polar residues; the sequence is QLNRPNSLIGITSAY. Residues 812 to 837 are compositionally biased toward basic and acidic residues; sequence GTKESEREGGKKEEEKEEDKSQPKSI. The span at 838–849 shows a compositional bias: basic residues; it reads RERRRPREKRRS. Residue Thr-850 is modified to Phosphothreonine; by ROCK2. Positions 864–880 are enriched in basic and acidic residues; it reads QEHQSDSEEGTNKKETQ. The segment covering 881–896 has biased composition (polar residues); the sequence is SDSLSRYDTGSLSVSS.

PP1 comprises a catalytic subunit, PPP1CA, PPP1CB or PPP1CC, and one or several targeting or regulatory subunits. PPP1R12A mediates binding to myosin. Post-translationally, phosphorylated by CIT (Rho-associated kinase) and by ROCK2 on serine and threonine residues. Phosphorylation at Thr-695 leads to inhibition of myosin phosphatase activity. Phosphorylation at Thr-850 abolishes myosin binding. May be phosphorylated at Thr-695 by DMPK; may inhibit the myosin phosphatase activity. As to expression, detected in brain, lung, aorta, heart, gizzard, stomach, oviduct, spleen, kidney and small intestine.

It localises to the cytoplasm. Its subcellular location is the cytoskeleton. The protein resides in the stress fiber. Regulates myosin phosphatase activity. The sequence is that of Protein phosphatase 1 regulatory subunit 12A (PPP1R12A) from Gallus gallus (Chicken).